The sequence spans 441 residues: Transcriptional regulatory protein ZraR (441 aa).

The Response regulatory domain maps to 7 to 121 (DILVVDDDVS…RLQETLEKAL (115 aa)). Asp-56 is modified (4-aspartylphosphate). In terms of domain architecture, Sigma-54 factor interaction spans 141–370 (MIGSSPAMQH…LENAIERAVV (230 aa)). Positions 172, 173, 329, and 359 each coordinate ATP. A DNA-binding region (H-T-H motif) is located at residues 421 to 440 (KTEAARQLGITRKTLLAKLS).

Post-translationally, phosphorylated by ZraS.

The protein localises to the cytoplasm. Activity of the ZraS/ZraR two-component system is repressed by the zinc-bound form of ZraP, which probably interacts with the periplasmic region of ZraS. Part of the Zra signaling pathway, an envelope stress response (ESR) system composed of the periplasmic accessory protein ZraP, the histidine kinase ZraS and the transcriptional regulator ZraR. The ZraPSR system contributes to antibiotic resistance and is important for membrane integrity in the presence of membrane-targeting biocides. ZraR is a member of the two-component regulatory system ZraS/ZraR. When activated by ZraS, acts in conjunction with sigma-54 to regulate the expression of zraP in the presence of high Zn(2+) or Pb(2+) concentrations. Also positively autoregulates the expression of the zraSR operon. The sequence is that of Transcriptional regulatory protein ZraR (zraR) from Salmonella typhi.